A 146-amino-acid polypeptide reads, in one-letter code: Snaclec coagulation factor X-activating enzyme light chain 1 (146 aa).

The signal sequence occupies residues 1-23 (MGRFISVSFGCLVVFLSLSGTEA). Residues Cys27 and Cys38 are joined by a disulfide bond. Residues 34 to 145 (YEQHCYKGFN…CNFIAPVVCK (112 aa)) form the C-type lectin domain. Residue Asn47 is glycosylated (N-linked (GlcNAc...) (complex) asparagine). 2 disulfide bridges follow: Cys55-Cys144 and Cys121-Cys136.

It belongs to the snaclec family. Heterotrimer; disulfide-linked. The heterotrimer consists of 1 heavy chain (a metalloproteinase) and 2 light chains: LC1 and LC2. In terms of processing, N-glycosylated; probably required for conformation. Removal of easily accessible sugars does not change its functional capacity, but removal of the core sugars with N-glycanase causes a virtually complete loss of enzyme activity, apparently as a result of major conformational changes in the molecule. Not O-glycosylated. In terms of tissue distribution, expressed by the venom gland.

It is found in the secreted. Functionally, regulatory subunit of the blood coagulation factor X- and IX-activating enzyme. The enzyme activates coagulation factor X (F10) by cleaving the Arg-Ile bond and is also able to activate coagulation factor IX (F9) and protein S (PROS1) by specific cleavage of Arg-Ile and Arg-Val bonds. May serve as an exosite by which the enzyme recognizes and binds to the Gla domain of factor X (F10) and factor IX (F9) in a calcium-dependent manner. This chain is Snaclec coagulation factor X-activating enzyme light chain 1 (LC1), found in Daboia siamensis (Eastern Russel's viper).